The chain runs to 804 residues: Type 2 DNA topoisomerase 6 subunit B (804 aa).

Residues N58, D89, 110-111 (SR), 120-127 (GQQGIGIS), and K629 contribute to the ATP site.

The protein belongs to the TOP6B family. Homodimer. Heterotetramer of two Top6A and two Top6B chains.

The catalysed reaction is ATP-dependent breakage, passage and rejoining of double-stranded DNA.. Its function is as follows. Relaxes both positive and negative superturns and exhibits a strong decatenase activity. The chain is Type 2 DNA topoisomerase 6 subunit B from Halobacterium salinarum (strain ATCC 29341 / DSM 671 / R1).